We begin with the raw amino-acid sequence, 202 residues long: Nucleoside triphosphate pyrophosphatase (202 aa).

Residue D79 is the Proton acceptor of the active site.

It belongs to the Maf family. A divalent metal cation serves as cofactor.

Its subcellular location is the cytoplasm. The catalysed reaction is a ribonucleoside 5'-triphosphate + H2O = a ribonucleoside 5'-phosphate + diphosphate + H(+). It catalyses the reaction a 2'-deoxyribonucleoside 5'-triphosphate + H2O = a 2'-deoxyribonucleoside 5'-phosphate + diphosphate + H(+). In terms of biological role, nucleoside triphosphate pyrophosphatase. May have a dual role in cell division arrest and in preventing the incorporation of modified nucleotides into cellular nucleic acids. The chain is Nucleoside triphosphate pyrophosphatase from Rhodopseudomonas palustris (strain ATCC BAA-98 / CGA009).